The primary structure comprises 328 residues: Sin3 histone deacetylase corepressor complex component SDS3 (328 aa).

Over residues 1–22 (MSAAGLLAPAPAPAAAPAAPEY) the composition is skewed to low complexity. The segment at 1-69 (MSAAGLLAPA…HDEEDYVEMK (69 aa)) is disordered. Ser2 is subject to N-acetylserine. The interval 2-170 (SAAGLLAPAP…IENEKLTMEL (169 aa)) is mediates interaction with USP17L2. Acidic residues-rich tracts occupy residues 23–37 (YPED…EDDE) and 45–54 (SDEDTEDASE). Phosphoserine occurs at positions 32 and 45. Thr49 bears the Phosphothreonine mark. At Ser53 the chain carries Phosphoserine. Positions 56–69 (DLAKHDEEDYVEMK) are enriched in basic and acidic residues. A coiled-coil region spans residues 66–171 (VEMKEQMYQD…ENEKLTMELT (106 aa)). Residues Lys69, Lys178, and Lys201 each participate in a glycyl lysine isopeptide (Lys-Gly) (interchain with G-Cter in SUMO2) cross-link. A sin3 interaction domain (SID) region spans residues 188–226 (RPNDPVPIPDKRRKPAPAQLNYLLTDEQIMEDLRTLNKL). The segment at 226-252 (LKSPKRPASPSSPEHLPATPAESPAQR) is disordered. Residues Ser228, Ser234, and Ser237 each carry the phosphoserine modification. Phosphothreonine is present on Thr244.

The protein belongs to the SDS3 family. In terms of assembly, interacts with HCFC1. Homodimer. Component of the SIN3 histone deacetylase (HDAC) corepressor complex. Interacts with SIN3A. Interaction with SIN3B enhances the interaction between SIN3B and HDAC1 to form a complex. Component of a mSin3A corepressor complex that contains SIN3A, SAP130, SUDS3/SAP45, ARID4B/SAP180, HDAC1 and HDAC2. Interacts with USP17L2; the interaction is direct. Interacts with FOXK2. Polyubiquitinated. 'Lys-63'-polyubiquitinated SUDS3 positively regulates histone deacetylation. Regulated through deubiquitination by USP17L2/USP17 that cleaves 'Lys-63'-linked ubiquitin chains. Expressed in all newborn tissues tested, including brain, kidney and liver.

It localises to the nucleus. Its function is as follows. Regulatory protein which represses transcription and augments histone deacetylase activity of HDAC1. May have a potential role in tumor suppressor pathways through regulation of apoptosis. May function in the assembly and/or enzymatic activity of the mSin3A corepressor complex or in mediating interactions between the complex and other regulatory complexes. The protein is Sin3 histone deacetylase corepressor complex component SDS3 (Suds3) of Mus musculus (Mouse).